A 543-amino-acid polypeptide reads, in one-letter code: Mannuronan C5-epimerase (543 aa).

The first 35 residues, 1-35, serve as a signal peptide directing secretion; that stretch reads MPDISLSIPRRRLPRLRPLAAAVLGAVLLHGQAWA. PbH1 repeat units lie at residues 243–270, 283–304, 305–327, 329–352, 354–376, 378–400, and 401–423; these read GAEV…SISQ, RPKG…YCYE, ADDL…DPHD, SHRL…IVSR, VNDS…VLDR, SEGN…TLYE, and SGDN…RVRN. Histidine 326 acts as the Proton acceptor in catalysis.

Belongs to the D-mannuronate C5-epimerase family.

Its subcellular location is the periplasm. It catalyses the reaction [(1-&gt;4)-beta-D-mannuronosyl](n) = [alginate](n). It functions in the pathway glycan biosynthesis; alginate biosynthesis. Its activity is regulated as follows. Inhibited by the presence of acetyl groups on the substrate. In terms of biological role, catalyzes the epimerization of beta-D-mannuronate to alpha-L-guluronate during the synthesis of the linear polysaccharide alginate. In addition, is part of a periplasmic protein complex that protects alginate from degradation by AlgL by channeling the newly formed alginate polymer through a scaffold that transfers the alginate polymer through the periplasmic space to the outer membrane secretin AlgE. This is Mannuronan C5-epimerase from Pseudomonas aeruginosa (strain ATCC 15692 / DSM 22644 / CIP 104116 / JCM 14847 / LMG 12228 / 1C / PRS 101 / PAO1).